Here is a 141-residue protein sequence, read N- to C-terminus: Neuropeptides CP2 (141 aa).

An N-terminal signal peptide occupies residues 1-26 (MDSRICTSFARLMASALCVSTLLVTA). The tract at residues 75-94 (KVDMPLPRQRTSSRSSERWA) is disordered. Histidine amide is present on His140.

As to expression, neurons.

The protein localises to the secreted. In terms of biological role, mediates intrinsic neuromodulation. In Aplysia californica (California sea hare), this protein is Neuropeptides CP2 (CP2PP).